Reading from the N-terminus, the 401-residue chain is Nodal homolog 3-B (401 aa).

The N-terminal stretch at 1 to 18 is a signal peptide; that stretch reads MAFLSLFLCLVFSSPLMA. Residues 19–274 constitute a propeptide that is removed on maturation; it reads MPPALQGRKA…KVNGFRRLRR (256 aa). Residues N168, N337, and N344 are each glycosylated (N-linked (GlcNAc...) asparagine). Cystine bridges form between C299–C365 and C328–C396.

This sequence belongs to the TGF-beta family. As to quaternary structure, monomer. The propeptide region interacts with bmp4 in a non-covalent manner. As to expression, expressed in the dorsal marginal region of late blastula, becoming restricted to the Spemann organizer at the early gastrula stage.

Its subcellular location is the secreted. In terms of biological role, exhibits mesoderm-dorsalizing activity and neural-inducing activity, but lacks mesoderm-inducing activity. Regulates the expression of specific mesodermal and neural genes. Induces convergent extension movements at the embryonic midline by activating the fgf signaling pathway to induce t/bra expression in the organizer region. Acts with wnt11 to induce Spemann organizer cells and induce axis formation. The unprocessed protein antagonizes bmp-signaling. This chain is Nodal homolog 3-B, found in Xenopus tropicalis (Western clawed frog).